The chain runs to 281 residues: Large ribosomal subunit protein uL2 (281 aa).

Residues 27–38 show a composition bias toward basic and acidic residues; it reads DSPEKSLTEPLK. 2 disordered regions span residues 27–59 and 225–281; these read DSPEKSLTEPLKRSGGRNVHGHITRRHQGGGHK and AMNP…ARSQ. Residues 45 to 59 are compositionally biased toward basic residues; the sequence is VHGHITRRHQGGGHK.

Belongs to the universal ribosomal protein uL2 family. Part of the 50S ribosomal subunit. Forms a bridge to the 30S subunit in the 70S ribosome.

One of the primary rRNA binding proteins. Required for association of the 30S and 50S subunits to form the 70S ribosome, for tRNA binding and peptide bond formation. It has been suggested to have peptidyltransferase activity; this is somewhat controversial. Makes several contacts with the 16S rRNA in the 70S ribosome. The polypeptide is Large ribosomal subunit protein uL2 (Myxococcus xanthus (strain DK1622)).